The chain runs to 226 residues: Large ribosomal subunit protein uL3 (226 aa).

A disordered region spans residues 135 to 158; that stretch reads MSSQRASHGNSRSHNVPGSIGMAQ. Over residues 137–150 the composition is skewed to polar residues; that stretch reads SQRASHGNSRSHNV. Glutamine 158 is modified (N5-methylglutamine).

It belongs to the universal ribosomal protein uL3 family. Part of the 50S ribosomal subunit. Forms a cluster with proteins L14 and L19. In terms of processing, methylated by PrmB.

In terms of biological role, one of the primary rRNA binding proteins, it binds directly near the 3'-end of the 23S rRNA, where it nucleates assembly of the 50S subunit. This is Large ribosomal subunit protein uL3 from Polaromonas naphthalenivorans (strain CJ2).